The chain runs to 245 residues: uncharacterized protein (245 aa).

This is an uncharacterized protein from Dictyostelium discoideum (Social amoeba).